A 280-amino-acid chain; its full sequence is Probable endonuclease 4 (280 aa).

9 residues coordinate Zn(2+): His-69, His-109, Glu-145, Asp-179, His-182, His-216, Asp-229, His-231, and Glu-261.

The protein belongs to the AP endonuclease 2 family. Zn(2+) is required as a cofactor.

The catalysed reaction is Endonucleolytic cleavage to 5'-phosphooligonucleotide end-products.. Functionally, endonuclease IV plays a role in DNA repair. It cleaves phosphodiester bonds at apurinic or apyrimidinic (AP) sites, generating a 3'-hydroxyl group and a 5'-terminal sugar phosphate. This is Probable endonuclease 4 from Aliarcobacter butzleri (strain RM4018) (Arcobacter butzleri).